The sequence spans 404 residues: Type I restriction enzyme EcoR124I/EcoR124II specificity subunit (404 aa).

The tract at residues 1–153 is target-recognition domain 1; the sequence is MSEMSYLEKL…PIPCPDNPEK (153 aa). The conserved region 1 stretch occupies residues 154-199; the sequence is SLAIQSEIVRILDKFTALTAELTAELNMRKKQYNYYRDQLLSFKEG. Residues 200-349 form a target-recognition domain 2 region; that stretch reads EVEWKTLGEI…KLFSFKIPVP (150 aa). A conserved region 2 region spans residues 350–404; that stretch reads NINEQQRIVEILDKFDTLTNSITEGLPREIELRQKQYEYYRDLLFSFPKPETVSN.

Belongs to the type-I restriction system S methylase family. In terms of assembly, the type I restriction/modification system is composed of three polypeptides R, M and S; the restriction enzyme has stoichiometry R(2)M(2)S(1) while the methyltransferase is M(2)S(1). There is an equilibrium between R(2)M(2)S(1) and R(1)M(2)S(1); the latter is methylation and translocation proficient but restriction deficient. (Microbial infection) Holoenenzyme interacts with Escherichia phage T7 protein Ocr; this interaction leads to the inhibition of the restriction activity, but may still allow methylation and translocation.

Functionally, the specificity (S) subunit of a type I restriction enzyme; this subunit dictates DNA sequence specificity. The presence or absence of a 4-residue repeat changes the sequence specificity; a third copy of TAEL inserted at position 179-180 changes the recognition site from 5'-GAAN(6)RTCG-3' (for EcoR124I) to 5'-GAAN(7)RTCG-3' (for EcoR124II). The M and S subunits together form a methyltransferase (MTase) that methylates A-3 on the top and bottom strand of the sequence 5'-GAAN(7)RTCG-3'. In the presence of the R subunit the complex can also act as an endonuclease, binding to the same target sequence but cutting the DNA some distance from this site. Whether the DNA is cut or modified depends on the methylation state of the target sequence. When the target site is unmodified, the DNA is cut. When the target site is hemimethylated, the complex acts as a maintenance MTase modifying the DNA so that both strands become methylated. After locating a non-methylated recognition site, the enzyme complex serves as a molecular motor that translocates DNA in an ATP-dependent manner until a collision occurs that triggers cleavage. The R(1)M(2)S(1) complex translocates an average of 555 bp/second on nicked DNA; the R(2)M(2)S(1) complex translocates at double that speed. The 2 R subunit motors are independent and track along the helical pitch of the DNA, inducing positive supercoiling ahead of themselves. The chain is Type I restriction enzyme EcoR124I/EcoR124II specificity subunit (hsdS) from Escherichia coli.